The following is a 248-amino-acid chain: UPF0736 protein Bcer98_0893 (248 aa).

The protein belongs to the UPF0736 family.

This chain is UPF0736 protein Bcer98_0893, found in Bacillus cytotoxicus (strain DSM 22905 / CIP 110041 / 391-98 / NVH 391-98).